We begin with the raw amino-acid sequence, 1873 residues long: Replicase polyprotein 1a (1873 aa).

Residues cysteine 344 and histidine 393 each act as for leader protease activity in the active site. The 180-residue stretch at 495 to 674 (SFNQKSYSNH…HSCQTLKDIL (180 aa)) folds into the Alphavirus-like MT domain. A disordered region spans residues 1356–1381 (VMPPLEEVETPKRSVGRPSSKQDDIE). Positions 1538 to 1705 (RGMYSNERCR…FFRKQDLNYD (168 aa)) constitute a (+)RNA virus helicase ATP-binding domain. Residues 1706 to 1873 (TYTYRCPLDT…LKDYHFRQCL (168 aa)) form the (+)RNA virus helicase C-terminal domain.

The catalysed reaction is ATP + H2O = ADP + phosphate + H(+). In Beta vulgaris (Sugar beet), this protein is Replicase polyprotein 1a.